A 705-amino-acid polypeptide reads, in one-letter code: Ovotransferrin (705 aa).

The N-terminal stretch at 1-19 (MKLILCTVLSLGIAAVCFA) is a signal peptide. 2 Transferrin-like domains span residues 26–352 (IRWC…SMRK) and 364–689 (IQWC…SLKT). 2 disulfide bridges follow: cysteine 29–cysteine 64 and cysteine 39–cysteine 55. Positions 79 and 111 each coordinate Fe(3+). 4 cysteine pairs are disulfide-bonded: cysteine 134-cysteine 216, cysteine 179-cysteine 193, cysteine 190-cysteine 201, and cysteine 247-cysteine 261. Hydrogencarbonate is bound by residues threonine 136, arginine 140, alanine 142, and glycine 143. A Fe(3+)-binding site is contributed by tyrosine 210. A Fe(3+)-binding site is contributed by histidine 269. A connecting region region spans residues 352–360 (KDQLTPSPR). 2 disulfide bridges follow: cysteine 367–cysteine 399 and cysteine 377–cysteine 390. Fe(3+)-binding residues include aspartate 414 and tyrosine 450. Disulfide bonds link cysteine 424-cysteine 699, cysteine 440-cysteine 662, cysteine 473-cysteine 549, cysteine 497-cysteine 690, cysteine 507-cysteine 521, cysteine 518-cysteine 532, and cysteine 589-cysteine 603. Threonine 475, arginine 479, alanine 481, and glycine 482 together coordinate hydrogencarbonate. The N-linked (GlcNAc...) asparagine glycan is linked to asparagine 492. Tyrosine 543 is a Fe(3+) binding site. A Fe(3+)-binding site is contributed by histidine 611.

It belongs to the transferrin family. In terms of assembly, monomer. Post-translationally, different forms of hen transferrin are distinguished by their carbohydrate composition. Ovotransferrin and embryo serum transferrin but not adult serum transferrin, have bisecting N-acetylglucosamine. Transferrin secreted by embryo hepatocytes in primary culture is marked by the presence of (alpha1-6) fucosylation of the core N-acetylglucosamine. Serum transferrins also differ in the number of attached neuraminic acid residues. In both embryo forms, sialylation occurs on the Man (alpha 1-3)-linked antennae. In terms of tissue distribution, expressed in the magnum of the oviduct (at protein level).

It localises to the secreted. Transferrins are iron binding transport proteins which can bind two Fe(3+) ions in association with the binding of an anion, usually bicarbonate. Responsible for the transport of iron from sites of absorption and heme degradation to those of storage and utilization. There are two forms of hen transferrin, ovotransferrin, found in the ovoducts and, serum transferrin, secreted by the liver. Serum transferrin may also have a role in stimulating cell proliferation and is regulated by iron levels. Ovotransferrin has a bacteriostatic function and, is not controlled by iron levels. This is Ovotransferrin from Gallus gallus (Chicken).